A 363-amino-acid chain; its full sequence is RNA polymerase I-specific transcription initiation factor RRN5 (363 aa).

Residues 301–344 form a disordered region; the sequence is LSRRDAPPVHQDENQENQENQENQEQDNTASEGESEAERDEIDE. Over residues 302–313 the composition is skewed to basic and acidic residues; the sequence is SRRDAPPVHQDE. Residues 317-328 are compositionally biased toward low complexity; that stretch reads NQENQENQEQDN. The span at 333-344 shows a compositional bias: acidic residues; it reads GESEAERDEIDE.

Component of the UAF (upstream activation factor) complex which consists of UAF30, RRN5, RRN9, RRN10, and histones H3 and H4.

The protein resides in the nucleus. It localises to the nucleolus. Functionally, component of the UAF (upstream activation factor) complex which interacts with the upstream element of the RNA polymerase I promoter and forms a stable preinitiation complex. Together with SPT15/TBP UAF seems to stimulate basal transcription to a fully activated level. This is RNA polymerase I-specific transcription initiation factor RRN5 (RRN5) from Saccharomyces cerevisiae (strain ATCC 204508 / S288c) (Baker's yeast).